The sequence spans 532 residues: Nucleobase-ascorbate transporter 6 (532 aa).

A disordered region spans residues 1-24 (MAGGGAPAPKADEPQPHPPKDQLP). Over residues 10–20 (KADEPQPHPPK) the composition is skewed to basic and acidic residues. 12 consecutive transmembrane segments (helical) span residues 39–59 (AILL…LIPT), 75–95 (VIQT…LFGT), 97–117 (LPAV…IILS), 137–157 (TQGA…SGLW), 163–185 (FLSP…EFGF), 192–212 (IEIG…LPHV), 223–243 (FAVI…TVGG), 289–309 (FAMM…FVAV), 361–381 (VGSR…SILG), 392–414 (APII…LSFL), 426–446 (FILG…NEYT), and 463–483 (DMVN…AFFL).

This sequence belongs to the nucleobase:cation symporter-2 (NCS2) (TC 2.A.40) family. Expressed in the apical region of cotyledons 4 days after imbibition (DAI). Expressed in the whole vasculature at 12 DAI. Expressed in the root central cylinder and lateral root primordia. Expressed in the vasculature of sepals, filaments, carpels and developing siliques.

The protein localises to the membrane. The sequence is that of Nucleobase-ascorbate transporter 6 (NAT6) from Arabidopsis thaliana (Mouse-ear cress).